A 404-amino-acid polypeptide reads, in one-letter code: CCA-adding enzyme (404 aa).

Glycine 32 and arginine 35 together coordinate ATP. Residues glycine 32 and arginine 35 each coordinate CTP. Positions 45 and 47 each coordinate Mg(2+). Residues arginine 116, aspartate 159, arginine 162, arginine 165, and arginine 168 each coordinate ATP. Residues arginine 116, aspartate 159, arginine 162, arginine 165, and arginine 168 each coordinate CTP.

This sequence belongs to the tRNA nucleotidyltransferase/poly(A) polymerase family. Bacterial CCA-adding enzyme type 3 subfamily. Homodimer. The cofactor is Mg(2+).

It carries out the reaction a tRNA precursor + 2 CTP + ATP = a tRNA with a 3' CCA end + 3 diphosphate. The enzyme catalyses a tRNA with a 3' CCA end + 2 CTP + ATP = a tRNA with a 3' CCACCA end + 3 diphosphate. Functionally, catalyzes the addition and repair of the essential 3'-terminal CCA sequence in tRNAs without using a nucleic acid template. Adds these three nucleotides in the order of C, C, and A to the tRNA nucleotide-73, using CTP and ATP as substrates and producing inorganic pyrophosphate. tRNA 3'-terminal CCA addition is required both for tRNA processing and repair. Also involved in tRNA surveillance by mediating tandem CCA addition to generate a CCACCA at the 3' terminus of unstable tRNAs. While stable tRNAs receive only 3'-terminal CCA, unstable tRNAs are marked with CCACCA and rapidly degraded. In Ligilactobacillus salivarius (strain UCC118) (Lactobacillus salivarius), this protein is CCA-adding enzyme.